The following is a 552-amino-acid chain: MRLLPLAPGRLRRGSPRHLPSCSPALLLLVLGGCLGVFGVAAGTRRPNVVLLLTDDQDEVLGGMTPLKKTKALIGEMGMTFSSAYVPSALCCPSRASILTGKYPHNHHVVNNTLEGNCSSKSWQKIQEPNTFPAILRSMCGYQTFFAGKYLNEYGAPDAGGLEHVPLGWSYWYALEKNSKYYNYTLSINGKARKHGENYSVDYLTDVLANVSLDFLDYKSNFEPFFMMIATPAPHSPWTAAPQYQKAFQNVFAPRNKNFNIHGTNKHWLIRQAKTPMTNSSIQFLDNAFRKRWQTLLSVDDLVEKLVKRLEFTGELNNTYIFYTSDNGYHTGQFSLPIDKRQLYEFDIKVPLLVRGPGIKPNQTSKMLVANIDLGPTILDIAGYDLNKTQMDGMSLLPILRGASNLTWRSDVLVEYQGEGRNVTDPTCPSLSPGVSQCFPDCVCEDAYNNTYACVRTMSALWNLQYCEFDDQEVFVEVYNLTADPDQITNIAKTIDPELLGKMNYRLMMLQSCSGPTCRTPGVFDPGYRFDPRLMFSNRGSVRTRRFSKHLL.

The signal sequence occupies residues 1-36 (MRLLPLAPGRLRRGSPRHLPSCSPALLLLVLGGCLG). Ca(2+) contacts are provided by D55, D56, and C91. Catalysis depends on C91, which acts as the Nucleophile. 3-oxoalanine (Cys) is present on C91. Residues N111, N117, N183, N198, N210, N279, and N317 are each glycosylated (N-linked (GlcNAc...) asparagine). 2 residues coordinate Ca(2+): D326 and N327. 6 N-linked (GlcNAc...) asparagine glycosylation sites follow: N362, N387, N405, N422, N449, and N480. A Phosphoserine modification is found at S541.

It belongs to the sulfatase family. The cofactor is Ca(2+). In terms of processing, the form A (78 kDa) is processed by internal peptidase cleavage to a 32 kDa N-terminal species (form B) and a 48 kDa C-terminal species. The conversion to 3-oxoalanine (also known as C-formylglycine, FGly), of a serine or cysteine residue in prokaryotes and of a cysteine residue in eukaryotes, is critical for catalytic activity.

Its subcellular location is the lysosome. The catalysed reaction is Hydrolysis of the 6-sulfate groups of the N-acetyl-D-glucosamine 6-sulfate units of heparan sulfate and keratan sulfate.. Its function is as follows. Hydrolyzes 6-sulfate groups in N-acetyl-d-glucosaminide units of heparin sulfate and keratan sulfate. This chain is N-acetylglucosamine-6-sulfatase (GNS), found in Homo sapiens (Human).